The chain runs to 677 residues: MLPSKIVRHKAGRFVPVLLAGLILAACSGQGPKSQSVDIQAPVTNNSAYYLQQVQQSSDDSKTDWQLLAIRALLKEGKYPQAAQAIGELPNQLSDKQQQELLLLKAQSLVAQQKIADAQPILSQVKTSELSQDQLARYYGLQIASAQGKTSLALLRAYIAQEPLLKGDERQQNIDATWQALTQLSQQDMNSLVINADENILQGWLDLLTAWHANAQDANMLKSAIKDWQTRYPDNPAAKTLPTQLSQVQNFTKASTSTIALLLPLNGQAQMFASAIQKGFNDAKNGTLATAPQATPGSAQDPIAINQQQPADANAVVSPSANPAAAQQSGTAQQPATTQQQPQQQPAAEPASNAQVKVYDTSSQPIAQVMQQAQQDGATLVVGPLLKNNVETVANSQTPLNVLALNEPEQIQNHPNMCYFALSPEDEARDAAHHIWDQGKRQPLLLVPRNGLGDRVTAAFTKEWQSLGGGTVLQQRFGSVSELKQGINSGAGISMSGTPVVMPSSSQPQSVSVAGLNIPAPQTSAPAASSGGAIDAAYIVSTQDELQLIKPMISMRTGSRSNVALYASSRSAQAGAGPDFRLEMEGLQFSDIPLLSGANPALMQQAAKSFNNDYSLVRLYAMGIDAWTLSNHFNQMRQVPGFSLDGNTGKLSATADCVINRKLTWNQYRQGNIVPAS.

An N-terminal signal peptide occupies residues 1-26 (MLPSKIVRHKAGRFVPVLLAGLILAA). Cysteine 27 carries the N-palmitoyl cysteine lipid modification. Residue cysteine 27 is the site of S-diacylglycerol cysteine attachment. The tract at residues 309–359 (QPADANAVVSPSANPAAAQQSGTAQQPATTQQQPQQQPAAEPASNAQVKVY) is disordered. The segment covering 313–355 (ANAVVSPSANPAAAQQSGTAQQPATTQQQPQQQPAAEPASNAQ) has biased composition (low complexity).

It belongs to the LpoA family. Interacts with PBP1a.

Its subcellular location is the cell outer membrane. Regulator of peptidoglycan synthesis that is essential for the function of penicillin-binding protein 1A (PBP1a). In Pantoea ananatis (strain LMG 20103), this protein is Penicillin-binding protein activator LpoA.